The primary structure comprises 442 residues: Protein PhoH2 (442 aa).

The 133-residue stretch at 3–135 folds into the PINc domain; the sequence is KIYVLDTNVL…LVSKDVLVRV (133 aa). 259–266 lines the ATP pocket; it reads GKAGTGKT.

The protein in the N-terminal section; belongs to the PINc/VapC protein family. It in the C-terminal section; belongs to the PhoH family.

The enzyme catalyses n ATP + n H2O + wound RNA = n ADP + n phosphate + unwound RNA.. It catalyses the reaction ATP + H2O = ADP + phosphate + H(+). The catalysed reaction is GTP + H2O = GDP + phosphate + H(+). Unwinds and/or cleaves 5'-tailed RNA in vitro. Has ATPase and GTPase activities. Unlike the protein in mycobacteria there does not seem to be an antitoxin gene upstream, suggesting this is not a toxin-antitoxin system. The chain is Protein PhoH2 from Bacillus subtilis (strain 168).